We begin with the raw amino-acid sequence, 300 residues long: Ribonuclease HIII (300 aa).

The RNase H type-2 domain occupies 83-300 (IPIIGSDEVG…THKAQALLTK (218 aa)). Residues Asp89, Glu90, and Asp194 each coordinate a divalent metal cation.

Belongs to the RNase HII family. RnhC subfamily. Mn(2+) is required as a cofactor. The cofactor is Mg(2+).

The protein localises to the cytoplasm. It carries out the reaction Endonucleolytic cleavage to 5'-phosphomonoester.. Its function is as follows. Endonuclease that specifically degrades the RNA of RNA-DNA hybrids. This is Ribonuclease HIII from Streptococcus pyogenes serotype M12 (strain MGAS2096).